Here is a 231-residue protein sequence, read N- to C-terminus: 2-C-methyl-D-erythritol 4-phosphate cytidylyltransferase (231 aa).

Belongs to the IspD/TarI cytidylyltransferase family. IspD subfamily.

The enzyme catalyses 2-C-methyl-D-erythritol 4-phosphate + CTP + H(+) = 4-CDP-2-C-methyl-D-erythritol + diphosphate. It functions in the pathway isoprenoid biosynthesis; isopentenyl diphosphate biosynthesis via DXP pathway; isopentenyl diphosphate from 1-deoxy-D-xylulose 5-phosphate: step 2/6. In terms of biological role, catalyzes the formation of 4-diphosphocytidyl-2-C-methyl-D-erythritol from CTP and 2-C-methyl-D-erythritol 4-phosphate (MEP). The sequence is that of 2-C-methyl-D-erythritol 4-phosphate cytidylyltransferase from Mycobacterium bovis (strain BCG / Pasteur 1173P2).